We begin with the raw amino-acid sequence, 169 residues long: Cell division inhibitor SulA (169 aa).

A ftsZ binding region spans residues 106-112; it reads ALRTGNY. Positions 162 to 169 are lon protease binding; that stretch reads KIHSNLYH.

This sequence belongs to the SulA family. In terms of assembly, interacts with FtsZ. Post-translationally, is rapidly cleaved and degraded by the Lon protease once DNA damage is repaired.

Functionally, component of the SOS system and an inhibitor of cell division. Accumulation of SulA causes rapid cessation of cell division and the appearance of long, non-septate filaments. In the presence of GTP, binds a polymerization-competent form of FtsZ in a 1:1 ratio, thus inhibiting FtsZ polymerization and therefore preventing it from participating in the assembly of the Z ring. This mechanism prevents the premature segregation of damaged DNA to daughter cells during cell division. In Salmonella choleraesuis (strain SC-B67), this protein is Cell division inhibitor SulA.